We begin with the raw amino-acid sequence, 357 residues long: Membrane-bound lytic murein transglycosylase C (357 aa).

The first 16 residues, 1 to 16 (MKKLLALFVIAPILIS), serve as a signal peptide directing secretion. A lipid anchor (N-palmitoyl cysteine) is attached at cysteine 17. Cysteine 17 carries S-diacylglycerol cysteine lipidation.

The protein belongs to the transglycosylase Slt family.

It localises to the cell outer membrane. The enzyme catalyses Exolytic cleavage of the (1-&gt;4)-beta-glycosidic linkage between N-acetylmuramic acid (MurNAc) and N-acetylglucosamine (GlcNAc) residues in peptidoglycan, from either the reducing or the non-reducing ends of the peptidoglycan chains, with concomitant formation of a 1,6-anhydrobond in the MurNAc residue.. Its function is as follows. Murein-degrading enzyme. May play a role in recycling of muropeptides during cell elongation and/or cell division. The chain is Membrane-bound lytic murein transglycosylase C from Photorhabdus laumondii subsp. laumondii (strain DSM 15139 / CIP 105565 / TT01) (Photorhabdus luminescens subsp. laumondii).